Consider the following 453-residue polypeptide: Nuclear distribution protein PAC1-2 (453 aa).

In terms of domain architecture, LisH spans 9 to 41; sequence QADELHKSIVAYLTANNLSTTAATLREELSLGE. Positions 63-87 form a coiled coil; that stretch reads VVRLQKKVMDLESRSVALQSELEHS. Residues 84 to 108 form a disordered region; the sequence is LEHSTPASLSKRKDPTSWLPRSPPR. WD repeat units follow at residues 113 to 154, 156 to 196, 200 to 243, 246 to 285, 290 to 350, 352 to 391, and 396 to 448; these read SHQA…RTLK, HTRA…KNTR, GHDH…CIKT, GHTGWVRDVVPSLDGRFLLSSGTDQTARLWDISAADPESK, GHEN…IKTL, GHDNWVSGLVFHPGGKYLLSVADDKTLRCWDLGDDGRCVK, and AHGQ…DKVV.

Belongs to the WD repeat LIS1/nudF family. In terms of assembly, self-associates. Interacts with NDL1 and dynein.

It is found in the cytoplasm. Its subcellular location is the cytoskeleton. The protein resides in the spindle pole. Functionally, positively regulates the activity of the minus-end directed microtubule motor protein dynein. May enhance dynein-mediated microtubule sliding by targeting dynein to the microtubule plus end. Required for nuclear migration during vegetative growth as well as development. Required for retrograde early endosome (EE) transport from the hyphal tip. Required for localization of dynein to the mitotic spindle poles. Recruits additional proteins to the dynein complex at SPBs. In Chaetomium globosum (strain ATCC 6205 / CBS 148.51 / DSM 1962 / NBRC 6347 / NRRL 1970) (Soil fungus), this protein is Nuclear distribution protein PAC1-2.